The sequence spans 319 residues: MDKYPFLREAGSSFKDRDVTKMSDLIATWDGQDIKGPALIGVPLSKSSISHSGASFAPGTIRQALKHSSAYSAELGEHVVSELLYDLGDIDIHVTDIVKSHHHIFQTMHALLSDHPDWVPLILGGDNSISYSTIKAIAQTKGTTAVIQFDAHHDVRNTEDGGPTNGTPFRRLLDEEIIEGQHLIQLGIREFSNSQAYEAYAKKHNVNIHTMDMIREKGLIPTIKEILPVVQDKTDFIFISVDMDVLDQSHAPGCPAIGPGGLYTDELLEAVKYIAQQPNVAGIEIVEVDPTLDFRDMTSRAAAHVLLHALKGMKLSPFK.

Mn(2+)-binding residues include N127, D150, H152, D154, D242, and D244.

This sequence belongs to the arginase family. Mn(2+) serves as cofactor.

The enzyme catalyses N-formimidoyl-L-glutamate + H2O = formamide + L-glutamate. It participates in amino-acid degradation; L-histidine degradation into L-glutamate; L-glutamate from N-formimidoyl-L-glutamate (hydrolase route): step 1/1. Its function is as follows. Catalyzes the conversion of N-formimidoyl-L-glutamate to L-glutamate and formamide. In Bacillus subtilis (strain 168), this protein is Formimidoylglutamase.